A 260-amino-acid polypeptide reads, in one-letter code: Proansamycin X synthase (260 aa).

Cysteine 73 serves as the catalytic Acyl-thioester intermediate. Catalysis depends on residues histidine 111 and aspartate 126.

The protein belongs to the arylamine N-acetyltransferase family.

Its pathway is antibiotic biosynthesis; rifamycin B biosynthesis. In terms of biological role, catalyzes the release of the completed linear polyketide from the rif PKS by forming an intramolecular amide bond, in this way terminating polyketide assembly and forming the macrocyclic compound proansamycin X, an intermediate in the rifamycin B biosynthesis. The protein is Proansamycin X synthase (rifF) of Amycolatopsis mediterranei (strain S699) (Nocardia mediterranei).